The chain runs to 133 residues: Small ribosomal subunit protein uS9 (133 aa).

The tract at residues 102-133 (KPKGLLTRDPREVERKKYGLKKARRAPQFSKR) is disordered. A compositionally biased stretch (basic and acidic residues) spans 107–118 (LTRDPREVERKK). Residues 119–133 (YGLKKARRAPQFSKR) are compositionally biased toward basic residues.

The protein belongs to the universal ribosomal protein uS9 family.

The chain is Small ribosomal subunit protein uS9 from Deinococcus deserti (strain DSM 17065 / CIP 109153 / LMG 22923 / VCD115).